A 269-amino-acid chain; its full sequence is 4-hydroxy-tetrahydrodipicolinate reductase (269 aa).

NAD(+) contacts are provided by residues 8 to 13 (GASGRM), E34, 98 to 100 (GTT), and 122 to 125 (APNM). H155 (proton donor/acceptor) is an active-site residue. H156 lines the (S)-2,3,4,5-tetrahydrodipicolinate pocket. K159 serves as the catalytic Proton donor. (S)-2,3,4,5-tetrahydrodipicolinate is bound at residue 165–166 (GT).

It belongs to the DapB family.

Its subcellular location is the cytoplasm. The catalysed reaction is (S)-2,3,4,5-tetrahydrodipicolinate + NAD(+) + H2O = (2S,4S)-4-hydroxy-2,3,4,5-tetrahydrodipicolinate + NADH + H(+). It catalyses the reaction (S)-2,3,4,5-tetrahydrodipicolinate + NADP(+) + H2O = (2S,4S)-4-hydroxy-2,3,4,5-tetrahydrodipicolinate + NADPH + H(+). It functions in the pathway amino-acid biosynthesis; L-lysine biosynthesis via DAP pathway; (S)-tetrahydrodipicolinate from L-aspartate: step 4/4. Its function is as follows. Catalyzes the conversion of 4-hydroxy-tetrahydrodipicolinate (HTPA) to tetrahydrodipicolinate. In Desulfotalea psychrophila (strain LSv54 / DSM 12343), this protein is 4-hydroxy-tetrahydrodipicolinate reductase.